Consider the following 106-residue polypeptide: ATP-dependent Clp protease adapter protein ClpS (106 aa).

This sequence belongs to the ClpS family. Binds to the N-terminal domain of the chaperone ClpA.

Involved in the modulation of the specificity of the ClpAP-mediated ATP-dependent protein degradation. The protein is ATP-dependent Clp protease adapter protein ClpS of Enterobacter sp. (strain 638).